Consider the following 414-residue polypeptide: Putative truncated GMC-type inactive oxidoreductase R832 (414 aa).

An N-terminal signal peptide occupies residues 1-20 (MNPTKLFLVFVAFAFAIINA). 38–67 (DYIIVGSGPGGSRAVQQCIAKGHKCTLVER) provides a ligand contact to FAD.

This sequence belongs to the GMC oxidoreductase family. FAD serves as cofactor.

The polypeptide is Putative truncated GMC-type inactive oxidoreductase R832 (Acanthamoeba polyphaga (Amoeba)).